Consider the following 2213-residue polypeptide: Protein sidekick-1 (2213 aa).

The disordered stretch occupies residues 1–73 (MARGARPSAA…GAGRCGGRRA (73 aa)). Residues 23 to 38 (AGPGRPRGSPPGRARP) are compositionally biased toward low complexity. 5 consecutive Ig-like C2-type domains span residues 104–186 (PYFK…SEVQ), 191–277 (GSFM…SPFI), 293–378 (PTIV…RATA), 386–476 (PYFT…LDVT), and 480–569 (PVFT…ATLT). Residues Cys126 and Cys169 are joined by a disulfide bond. Residues Asn271 and Asn301 are each glycosylated (N-linked (GlcNAc...) asparagine). Cystine bridges form between Cys315–Cys362, Cys408–Cys458, and Cys501–Cys553. Residues Asn550, Asn563, and Asn572 are each glycosylated (N-linked (GlcNAc...) asparagine). One can recognise an Ig-like C2-type 6 domain in the interval 574-663 (TSIVHPPEDH…GNDSRMARLE (90 aa)). An intrachain disulfide couples Cys595 to Cys647. N-linked (GlcNAc...) asparagine glycosylation is found at Asn655, Asn679, Asn782, Asn821, Asn882, Asn1015, and Asn1024. 13 consecutive Fibronectin type-III domains span residues 670–766 (SPQN…LPEE), 771–867 (PPKN…TLQG), 872–970 (PPQN…TQED), 974–1068 (AVGH…VPPD), 1072–1171 (APSN…TLQA), 1176–1274 (APTS…TRES), 1279–1376 (APEN…TKDD), 1380–1474 (PPVR…TEKR), 1479–1576 (PPRE…TLQD), 1581–1699 (PPGS…VGEA), 1704–1800 (APQN…THQA), 1804–1899 (APSF…AGPA), and 1902–2000 (SPGS…SAQV). N-linked (GlcNAc...) asparagine glycans are attached at residues Asn1282 and Asn1333. N-linked (GlcNAc...) asparagine glycosylation is found at Asn1654, Asn1748, Asn1767, Asn1819, and Asn1893. A helical transmembrane segment spans residues 2010–2030 (FLLVMALSSLIVILLVVFALV). The Cytoplasmic portion of the chain corresponds to 2031–2213 (LHGQNKKYKN…TPLTGFSSFV (183 aa)). Residues 2075-2098 (STFSKKNGTRSPPRPSPGGLHYSD) form a disordered region. Positions 2207-2213 (TGFSSFV) match the PDZ-binding motif.

It belongs to the sidekick family. In terms of assembly, homodimer; mediates homophilic interactions to promote cell adhesion. Up-regulated in glomeruli in HIV-associated nephropathy. In diseased glomeruli, significantly overexpressed and the expression is no longer restricted to mesangial cells but includes podocytes and parietal epithelial cells.

The protein resides in the cell membrane. It localises to the synapse. Its function is as follows. Adhesion molecule that promotes lamina-specific synaptic connections in the retina. Expressed in specific subsets of interneurons and retinal ganglion cells (RGCs) and promotes synaptic connectivity via homophilic interactions. The protein is Protein sidekick-1 of Homo sapiens (Human).